We begin with the raw amino-acid sequence, 422 residues long: Histidine--tRNA ligase (422 aa).

The protein belongs to the class-II aminoacyl-tRNA synthetase family. As to quaternary structure, homodimer.

The protein resides in the cytoplasm. The enzyme catalyses tRNA(His) + L-histidine + ATP = L-histidyl-tRNA(His) + AMP + diphosphate + H(+). The sequence is that of Histidine--tRNA ligase from Alcanivorax borkumensis (strain ATCC 700651 / DSM 11573 / NCIMB 13689 / SK2).